A 142-amino-acid chain; its full sequence is Large ribosomal subunit protein uL13 (142 aa).

It belongs to the universal ribosomal protein uL13 family. As to quaternary structure, part of the 50S ribosomal subunit.

Functionally, this protein is one of the early assembly proteins of the 50S ribosomal subunit, although it is not seen to bind rRNA by itself. It is important during the early stages of 50S assembly. The polypeptide is Large ribosomal subunit protein uL13 (Idiomarina loihiensis (strain ATCC BAA-735 / DSM 15497 / L2-TR)).